Here is a 959-residue protein sequence, read N- to C-terminus: E3 ubiquitin-protein ligase NEDD4-like (959 aa).

Residues 10–130 (PWHGVCVPVC…TEDPTMERPY (121 aa)) form the C2 domain. 3 disordered regions span residues 183 to 206 (SNDSASQHQEELPPPPLPPGWEEK), 248 to 275 (AAHRRFRSRRHISEDLEPEPSEGGDVPE), and 289 to 316 (DSLGLALPPPPASPGSRTSPQELSEELS). The region spanning 197–230 (PPLPPGWEEKVDNLGRTYYVNHNNRTTQWHRPSL) is the WW 1 domain. Phosphoserine is present on S316. Position 322 is a phosphothreonine (T322). At S346 the chain carries Phosphoserine; by WNK1 and WNK4. The WW 2 domain maps to 369–402 (PGLPSGWEERKDAKGRTYYVNHNNRTTTWTRPIM). Residues 408-478 (GASGSATNSN…YNSPKPQHKV (71 aa)) are disordered. Position 430 is a phosphoserine (S430). The residue at position 432 (S432) is a Phosphoserine; by SGK1. S433 bears the Phosphoserine; by WNK1 and WNK4 mark. Basic and acidic residues predominate over residues 444-455 (GAKDSPVRRAVK). S448 carries the phosphoserine; by SGK1 modification. A phosphoserine mark is found at S459, S463, S467, and S471. 2 WW domains span residues 481-514 (SFLPPGWEMRIAPNGRPFFIDHNTKTTTWEDPRL) and 532-565 (GPLPPGWEERIHLDGRTFYIDHNSKITQWEDPRL). An HECT domain is found at 624–958 (RPDVLKARLW…VENAQGFEGV (335 aa)). C926 acts as the Glycyl thioester intermediate in catalysis.

As to quaternary structure, interacts with UBE2E3. Interacts with NDFIP1; this interaction activates the E3 ubiquitin-protein ligase. Interacts with NDFIP2; this interaction activates the E3 ubiquitin-protein ligase. Interacts (via WW domains) with SCN1A. Interacts (via WW domains) with SCN2A. Interacts (via WW domains) with SCN3A. Interacts (via WW domains) with SCN5A. Interacts (via WW domains) with SCN8A. Interacts (via WW domains) with SCN9A. Interacts (via WW domains) with SCN10A. Interacts (via WW domains) with CLCN5. Interacts with SMAD2. Interacts with SMAD3. Interacts with SMAD6. Interacts with SMAD7. The phosphorylated form interacts with 14-3-3 proteins. Interacts with TNK2. Interacts with WNK1. Interacts with SGK1. Interacts (via C2 domain) with NPC2. Interacts with ARRDC4. Interacts with KCNQ1; promotes internalization of KCNQ1. Interacts (via domains WW1, 3 and 4) with USP36; the interaction inhibits ubiquitination of, at least, NTRK1, KCNQ2 and KCNQ3 by NEDD4L. Interacts with PRRG4 (via cytoplasmic domain). Interacts with LDLRAD3; the interaction is direct. Interacts with TTYH2 and TTYH3. In terms of processing, phosphorylated; which impairs interaction with SCNN. Interaction with YWHAH inhibits dephosphorylation. Auto-ubiquitinated.

The protein localises to the cytoplasm. The protein resides in the golgi apparatus. Its subcellular location is the endosome. It localises to the multivesicular body. It catalyses the reaction S-ubiquitinyl-[E2 ubiquitin-conjugating enzyme]-L-cysteine + [acceptor protein]-L-lysine = [E2 ubiquitin-conjugating enzyme]-L-cysteine + N(6)-ubiquitinyl-[acceptor protein]-L-lysine.. The protein operates within protein modification; protein ubiquitination. Activated by NDFIP1- and NDFIP2-binding. In terms of biological role, E3 ubiquitin-protein ligase which accepts ubiquitin from an E2 ubiquitin-conjugating enzyme in the form of a thioester and then directly transfers the ubiquitin to targeted substrates. Inhibits TGF-beta signaling by triggering SMAD2 and TGFBR1 ubiquitination and proteasome-dependent degradation. Promotes ubiquitination and internalization of various plasma membrane channels such as ENaC, Nav1.2, Nav1.3, Nav1.5, Nav1.7, Nav1.8, Kv1.3, KCNH2, EAAT1 or CLC5. Promotes ubiquitination and degradation of SGK1 and TNK2. Ubiquitinates BRAT1 and this ubiquitination is enhanced in the presence of NDFIP1. Plays a role in dendrite formation by melanocytes. Involved in the regulation of TOR signaling. Ubiquitinates TTYH2 and TTYH3 and regulates protein levels of TTYH2. This is E3 ubiquitin-protein ligase NEDD4-like (NEDD4L) from Pongo abelii (Sumatran orangutan).